We begin with the raw amino-acid sequence, 62 residues long: Photosystem II reaction center protein Z (62 aa).

2 helical membrane passes run 8-28 (ALAA…VAYA) and 41-61 (FVGS…NFFV).

It belongs to the PsbZ family. PSII is composed of 1 copy each of membrane proteins PsbA, PsbB, PsbC, PsbD, PsbE, PsbF, PsbH, PsbI, PsbJ, PsbK, PsbL, PsbM, PsbT, PsbX, PsbY, PsbZ, Psb30/Ycf12, peripheral proteins PsbO, CyanoQ (PsbQ), PsbU, PsbV and a large number of cofactors. It forms dimeric complexes.

The protein resides in the cellular thylakoid membrane. Functionally, may control the interaction of photosystem II (PSII) cores with the light-harvesting antenna, regulates electron flow through the 2 photosystem reaction centers. PSII is a light-driven water plastoquinone oxidoreductase, using light energy to abstract electrons from H(2)O, generating a proton gradient subsequently used for ATP formation. This is Photosystem II reaction center protein Z from Picosynechococcus sp. (strain ATCC 27264 / PCC 7002 / PR-6) (Agmenellum quadruplicatum).